The sequence spans 761 residues: Elongation factor G, mitochondrial (761 aa).

The N-terminal 33 residues, 1-33 (MTSVLRGVLKTHLPRTLTLPRCARNFQTTTFLR), are a transit peptide targeting the mitochondrion. Residues 66–347 (TRLRNIGISA…SVVDYLPQPN (282 aa)) form the tr-type G domain. GTP contacts are provided by residues 75–82 (AHIDSGKT), 146–150 (DTPGH), and 200–203 (NKMD).

It belongs to the TRAFAC class translation factor GTPase superfamily. Classic translation factor GTPase family. EF-G/EF-2 subfamily.

The protein resides in the mitochondrion. It participates in protein biosynthesis; polypeptide chain elongation. Functionally, mitochondrial GTPase that catalyzes the GTP-dependent ribosomal translocation step during translation elongation. During this step, the ribosome changes from the pre-translocational (PRE) to the post-translocational (POST) state as the newly formed A-site-bound peptidyl-tRNA and P-site-bound deacylated tRNA move to the P and E sites, respectively. Catalyzes the coordinated movement of the two tRNA molecules, the mRNA and conformational changes in the ribosome. This Candida dubliniensis (strain CD36 / ATCC MYA-646 / CBS 7987 / NCPF 3949 / NRRL Y-17841) (Yeast) protein is Elongation factor G, mitochondrial.